Consider the following 208-residue polypeptide: Small ribosomal subunit protein uS4 (208 aa).

The S4 RNA-binding domain maps to 97–158 (TRLDNVIYRM…RAQKYLCVQE (62 aa)).

This sequence belongs to the universal ribosomal protein uS4 family. In terms of assembly, part of the 30S ribosomal subunit. Contacts protein S5. The interaction surface between S4 and S5 is involved in control of translational fidelity.

In terms of biological role, one of the primary rRNA binding proteins, it binds directly to 16S rRNA where it nucleates assembly of the body of the 30S subunit. Functionally, with S5 and S12 plays an important role in translational accuracy. This Xylella fastidiosa (strain M12) protein is Small ribosomal subunit protein uS4.